Reading from the N-terminus, the 61-residue chain is Truncated 3-beta hydroxy-5-ene steroid dehydrogenase homolog (61 aa).

This sequence belongs to the 3-beta-HSD family.

The polypeptide is Truncated 3-beta hydroxy-5-ene steroid dehydrogenase homolog (Variola virus (isolate Human/India/Ind3/1967) (VARV)).